A 598-amino-acid polypeptide reads, in one-letter code: Elongation factor 4 (598 aa).

The region spanning 5 to 187 (ANIRNFSIIA…ALVEFIPAPT (183 aa)) is the tr-type G domain. Residues 17 to 22 (DHGKST) and 134 to 137 (NKID) contribute to the GTP site.

Belongs to the TRAFAC class translation factor GTPase superfamily. Classic translation factor GTPase family. LepA subfamily.

It is found in the cell inner membrane. The catalysed reaction is GTP + H2O = GDP + phosphate + H(+). In terms of biological role, required for accurate and efficient protein synthesis under certain stress conditions. May act as a fidelity factor of the translation reaction, by catalyzing a one-codon backward translocation of tRNAs on improperly translocated ribosomes. Back-translocation proceeds from a post-translocation (POST) complex to a pre-translocation (PRE) complex, thus giving elongation factor G a second chance to translocate the tRNAs correctly. Binds to ribosomes in a GTP-dependent manner. The polypeptide is Elongation factor 4 (Psychrobacter cryohalolentis (strain ATCC BAA-1226 / DSM 17306 / VKM B-2378 / K5)).